The chain runs to 521 residues: Methionine--tRNA ligase (521 aa).

Residues 14–24 carry the 'HIGH' region motif; that stretch reads YYSSGNPHIGH. Residues cysteine 129, cysteine 132, cysteine 151, and histidine 155 each coordinate Zn(2+). The short motif at 306 to 310 is the 'KMSKS' region element; it reads KMSKS. Residue lysine 309 participates in ATP binding.

Belongs to the class-I aminoacyl-tRNA synthetase family. MetG type 2A subfamily. In terms of assembly, monomer. Zn(2+) serves as cofactor.

The protein resides in the cytoplasm. It catalyses the reaction tRNA(Met) + L-methionine + ATP = L-methionyl-tRNA(Met) + AMP + diphosphate. Its function is as follows. Is required not only for elongation of protein synthesis but also for the initiation of all mRNA translation through initiator tRNA(fMet) aminoacylation. This is Methionine--tRNA ligase from Ureaplasma parvum serovar 3 (strain ATCC 700970).